Here is a 189-residue protein sequence, read N- to C-terminus: UPF0301 protein A1E_00140 (189 aa).

This sequence belongs to the UPF0301 (AlgH) family.

This chain is UPF0301 protein A1E_00140, found in Rickettsia canadensis (strain McKiel).